Consider the following 424-residue polypeptide: Arginine biosynthesis bifunctional protein ArgJ (424 aa).

Substrate contacts are provided by Thr166, Lys192, Thr203, Glu290, Asn419, and Thr424. The active-site Nucleophile is the Thr203.

Belongs to the ArgJ family. Heterotetramer of two alpha and two beta chains.

The protein resides in the cytoplasm. The enzyme catalyses N(2)-acetyl-L-ornithine + L-glutamate = N-acetyl-L-glutamate + L-ornithine. The catalysed reaction is L-glutamate + acetyl-CoA = N-acetyl-L-glutamate + CoA + H(+). It participates in amino-acid biosynthesis; L-arginine biosynthesis; L-ornithine and N-acetyl-L-glutamate from L-glutamate and N(2)-acetyl-L-ornithine (cyclic): step 1/1. Its pathway is amino-acid biosynthesis; L-arginine biosynthesis; N(2)-acetyl-L-ornithine from L-glutamate: step 1/4. In terms of biological role, catalyzes two activities which are involved in the cyclic version of arginine biosynthesis: the synthesis of N-acetylglutamate from glutamate and acetyl-CoA as the acetyl donor, and of ornithine by transacetylation between N(2)-acetylornithine and glutamate. In Colwellia psychrerythraea (strain 34H / ATCC BAA-681) (Vibrio psychroerythus), this protein is Arginine biosynthesis bifunctional protein ArgJ.